Reading from the N-terminus, the 83-residue chain is Delta-conotoxin-like Ac6.1 (83 aa).

Positions 1 to 22 (MKLTCVVIVAVLFLTAWTFVMA) are cleaved as a signal peptide. The propeptide occupies 23 to 51 (DDSRYGLKDLFPKARHEMKNPEASKLNKR). 3 cysteine pairs are disulfide-bonded: Cys54–Cys69, Cys61–Cys73, and Cys68–Cys78. A 4-hydroxyproline mark is found at Pro57 and Pro65.

It belongs to the conotoxin O1 superfamily. In terms of tissue distribution, expressed by the venom duct.

It localises to the secreted. Delta-conotoxins bind to site 6 of voltage-gated sodium channels (Nav) and inhibit the inactivation process. The sequence is that of Delta-conotoxin-like Ac6.1 from Conus achatinus (Little frog cone).